We begin with the raw amino-acid sequence, 87 residues long: Bradykinin-potentiating peptide NDBP12 (87 aa).

The signal sequence occupies residues 1 to 22 (MNKRVLLVIFFVTLLVADEVNS). Residues 64 to 75 (PAEAPAPAAAAP) show a composition bias toward low complexity. The disordered stretch occupies residues 64–87 (PAEAPAPAAAAPEEPPVEQRRRRR).

It belongs to the non-disulfide-bridged peptide (NDBP) superfamily. Long chain multifunctional peptide (group 2) family. In terms of tissue distribution, expressed by the venom gland.

It localises to the secreted. Functionally, inhibits angiotensin-converting enzyme (ACE), but does not serve as substrate for the enzyme. Potentiates bradykinin (BK) on the isolated guinea pig ileum as well as the isolated rat uterus for contraction. Also potentiates in vivo the depressor effect of BK on arterial blood pressure in the normotensive anesthetized rat. The polypeptide is Bradykinin-potentiating peptide NDBP12 (Lychas mucronatus (Chinese swimming scorpion)).